The primary structure comprises 184 residues: ATP synthase subunit b, chloroplastic (184 aa).

The chain crosses the membrane as a helical span at residues 27 to 49; sequence LATNPINLSVVFGVLIFFGKGVL.

The protein belongs to the ATPase B chain family. As to quaternary structure, F-type ATPases have 2 components, F(1) - the catalytic core - and F(0) - the membrane proton channel. F(1) has five subunits: alpha(3), beta(3), gamma(1), delta(1), epsilon(1). F(0) has four main subunits: a(1), b(1), b'(1) and c(10-14). The alpha and beta chains form an alternating ring which encloses part of the gamma chain. F(1) is attached to F(0) by a central stalk formed by the gamma and epsilon chains, while a peripheral stalk is formed by the delta, b and b' chains.

Its subcellular location is the plastid. The protein resides in the chloroplast thylakoid membrane. Functionally, f(1)F(0) ATP synthase produces ATP from ADP in the presence of a proton or sodium gradient. F-type ATPases consist of two structural domains, F(1) containing the extramembraneous catalytic core and F(0) containing the membrane proton channel, linked together by a central stalk and a peripheral stalk. During catalysis, ATP synthesis in the catalytic domain of F(1) is coupled via a rotary mechanism of the central stalk subunits to proton translocation. Its function is as follows. Component of the F(0) channel, it forms part of the peripheral stalk, linking F(1) to F(0). The sequence is that of ATP synthase subunit b, chloroplastic from Crucihimalaya wallichii (Rock-cress).